The primary structure comprises 279 residues: uncharacterized protein (279 aa).

The tract at residues 233 to 279 (NDHQLHDSPLCSDVSDSTSNNNYDESLNFSNDNNNSSFNDFDDDNFI) is disordered. Polar residues predominate over residues 246–259 (VSDSTSNNNYDESL). A compositionally biased stretch (low complexity) spans 260–271 (NFSNDNNNSSFN).

This is an uncharacterized protein from Buchnera aphidicola subsp. Baizongia pistaciae (strain Bp).